The sequence spans 303 residues: N-acetyl-D-glucosamine kinase (303 aa).

Residues G4–K11 and G133–F140 each bind ATP. 4 residues coordinate Zn(2+): H157, C177, C179, and C184.

Belongs to the ROK (NagC/XylR) family. NagK subfamily.

The catalysed reaction is N-acetyl-D-glucosamine + ATP = N-acetyl-D-glucosamine 6-phosphate + ADP + H(+). Its pathway is cell wall biogenesis; peptidoglycan recycling. Its function is as follows. Catalyzes the phosphorylation of N-acetyl-D-glucosamine (GlcNAc) derived from cell-wall degradation, yielding GlcNAc-6-P. The polypeptide is N-acetyl-D-glucosamine kinase (Shigella sonnei (strain Ss046)).